The sequence spans 1003 residues: NACHT, LRR and PYD domains-containing protein 9B (1003 aa).

Positions 1–91 (MAGSSGYGLL…SIMAQKKKRH (91 aa)) constitute a Pyrin domain. One can recognise an NACHT domain in the interval 143–465 (VTAIVAGTTG…QDKDICVPVI (323 aa)). 149–156 (GTTGEGKT) is an ATP binding site. LRR repeat units follow at residues 749 to 770 (KVKHLSLVENPLKNKGVMSLCE), 778 to 799 (VLQSLMLSYCCLTFIACGHLYE), 806 to 826 (HLSLLDLGSNFLEDTGVNLLC), 835 to 856 (TLKELWLPGCFLTSQCCEEISA), 863 to 883 (NLKTLKLGNNNIQDTGVRQLC), 892 to 913 (NLECLGLDLCEFTSDCCKDLAL), and 920 to 940 (TLNSLNLDWKTLDHSGLVVLC).

As to quaternary structure, sensor component of NLRP9 inflammasomes. Inflammasomes are supramolecular complexes that assemble in the cytosol in response to pathogens, such as rotavirus, but not encephalomyocarditis virus (EMCV), and play critical roles in innate immunity and inflammation. The core of NLRP9 inflammasomes consists of a signal sensor component (NLRP9), an adapter (ASC/PYCARD), which recruits an effector pro-inflammatory caspase (CASP1). Within the complex, NLRP9 and PYCARD interact via their respective DAPIN/pyrin domains. This interaction initiates speck formation (nucleation) which greatly enhances further addition of soluble PYCARD molecules to the speck in a prion-like polymerization process. Clustered PYCARD nucleates the formation of CASP1 filaments through the interaction of their respective CARD domains, acting as a platform for CASP1 polymerization. CASP1 filament formation increases local enzyme concentration, resulting in trans-autocleavage and activation. Active CASP1 then processes IL1B and IL18 precursors, leading to the release of mature cytokines in the extracellular milieu and inflammatory response. Interacts with DHX9 upon rotavirus infection; this interaction may trigger inflammasome activation and inflammatory response. In terms of tissue distribution, predominantly expressed in the intestine, including proximal and distal colon, cecum, ileum, jejunum and duodenum (at protein level). In the ileum, expressed in epithelial cells. Also expressed in oocytes at all follicular stages and in preimplantation embryos (at protein level). Although expression decreases in preimplantation embryos, it is still detectable in blastocyts.

The protein localises to the cytoplasm. It localises to the inflammasome. Its function is as follows. As the sensor component of the NLRP9 inflammasome, plays a crucial role in innate immunity and inflammation. In response to pathogens, including rotavirus, initiates the formation of the inflammasome polymeric complex, made of NLRP9, PYCARD and CASP1. Recruitment of proCASP1 to the inflammasome promotes its activation and CASP1-catalyzed IL1B and IL18 maturation and release in the extracellular milieu. The active cytokines stimulate inflammatory responses. Inflammasomes can also induce pyroptosis, an inflammatory form of programmed cell death. NLRP9 inflammasome activation may be initiated by DHX9 interaction with viral double-stranded RNA (dsRNA), preferentially to short dsRNA segments. This Mus musculus (Mouse) protein is NACHT, LRR and PYD domains-containing protein 9B (Nlrp9b).